Consider the following 802-residue polypeptide: Penicillin G acylase (802 aa).

Residues 1–24 (MKTKWLISVIILFVFIFPQNLVFA) form the signal peptide. Glu-177 provides a ligand contact to Ca(2+). Residues 235–265 (SAVIKASEKVGKERENFVQTSEELGLPLKIG) constitute a propeptide, spacer peptide. Ser-266 acts as the Nucleophile in catalysis. Ca(2+) is bound at residue Asp-341.

This sequence belongs to the peptidase S45 family. In terms of assembly, heterodimer of an alpha subunit and a beta subunit processed from the same precursor. Ca(2+) is required as a cofactor.

The protein localises to the secreted. The catalysed reaction is a penicillin + H2O = 6-aminopenicillanate + a carboxylate. In Priestia megaterium (Bacillus megaterium), this protein is Penicillin G acylase (pac).